The chain runs to 91 residues: Small ribosomal subunit protein uS19 (91 aa).

It belongs to the universal ribosomal protein uS19 family.

Functionally, protein S19 forms a complex with S13 that binds strongly to the 16S ribosomal RNA. In Bordetella avium (strain 197N), this protein is Small ribosomal subunit protein uS19.